The chain runs to 246 residues: 4-hydroxy-tetrahydrodipicolinate reductase (246 aa).

9 to 14 is an NAD(+) binding site; it reads GNTGRM. Arginine 36 contributes to the NADP(+) binding site. NAD(+) contacts are provided by residues 78-80 and 104-107; these read GTT and SPNM. The active-site Proton donor/acceptor is histidine 137. Histidine 138 contributes to the (S)-2,3,4,5-tetrahydrodipicolinate binding site. The active-site Proton donor is the lysine 141. 147–148 serves as a coordination point for (S)-2,3,4,5-tetrahydrodipicolinate; the sequence is GT.

It belongs to the DapB family.

The protein localises to the cytoplasm. It catalyses the reaction (S)-2,3,4,5-tetrahydrodipicolinate + NAD(+) + H2O = (2S,4S)-4-hydroxy-2,3,4,5-tetrahydrodipicolinate + NADH + H(+). The enzyme catalyses (S)-2,3,4,5-tetrahydrodipicolinate + NADP(+) + H2O = (2S,4S)-4-hydroxy-2,3,4,5-tetrahydrodipicolinate + NADPH + H(+). The protein operates within amino-acid biosynthesis; L-lysine biosynthesis via DAP pathway; (S)-tetrahydrodipicolinate from L-aspartate: step 4/4. Catalyzes the conversion of 4-hydroxy-tetrahydrodipicolinate (HTPA) to tetrahydrodipicolinate. This Chlamydia muridarum (strain MoPn / Nigg) protein is 4-hydroxy-tetrahydrodipicolinate reductase.